Consider the following 360-residue polypeptide: tRNA N6-adenosine threonylcarbamoyltransferase (360 aa).

Fe cation contacts are provided by His-111 and His-115. Substrate is bound by residues 134 to 138, Asp-167, Gly-180, Asp-184, and Asn-279; that span reads LVSGG. Residue Asp-307 participates in Fe cation binding.

The protein belongs to the KAE1 / TsaD family. Fe(2+) serves as cofactor.

The protein resides in the cytoplasm. The catalysed reaction is L-threonylcarbamoyladenylate + adenosine(37) in tRNA = N(6)-L-threonylcarbamoyladenosine(37) in tRNA + AMP + H(+). Functionally, required for the formation of a threonylcarbamoyl group on adenosine at position 37 (t(6)A37) in tRNAs that read codons beginning with adenine. Is involved in the transfer of the threonylcarbamoyl moiety of threonylcarbamoyl-AMP (TC-AMP) to the N6 group of A37, together with TsaE and TsaB. TsaD likely plays a direct catalytic role in this reaction. The polypeptide is tRNA N6-adenosine threonylcarbamoyltransferase (Acaryochloris marina (strain MBIC 11017)).